The sequence spans 635 residues: MLNRIQTLMKTANNYETIEILRNYLRLYIILARNEEGRGILIYDDNIDSVMSMMNITILEVIGLTHCTKLRSSPPIPMSRLFMDEIDHESYYSPKTSYYPLIDIIRKRSHEQGDIALALERYGIENTDSISEINEWLSSKGLACYRFVKFNDYRKQQMYRKFSRYTIVDSMIIGHIGHHYIWIKNLETYTRPEIDVLPFDIKCISRDELWARISSSLDQTHIKTIAVSVYGAITDNGPIPYMISTYPGNTFVNFNSVKDLILDFLDWIKDIMTSTRTIILVGYMSNLFDIPLLTVYWPNNCGWKIYNNTLISSDGARVIWMDVYKFSCGLSLQDYCYHWGSKPESRPFDLIKKSDAKRNTKSLVKESMASLKSLYEAFETQSGALEVLMSPCRMFSFSRIEDMFLTSVINRVSENTGMGMYYPTNDIPSLFIESSICLDYIIVNNQESNKYRIKSVLDIISSKQYPAGRPNYVKNGTKGKLYIALCKVTVPTNDHIPVVYHDDDNTTTFITVLTSVDIETAIRAGYSIVELGALQWDDNIPELKDCLLDSIKIIYDLNAVTTNNLLEQLIENINFNNSSIISLFYTFAISYCRAFIYSIMETIDPVYISQFSYKELYVSSSCKDINESMSQMVKL.

The protein belongs to the orthopoxvirus OPG056 family. In terms of assembly, interacts with protein OPG164. Interacts with protein OPG064.

It localises to the virion membrane. The protein resides in the host endosome. Plays a role in intracellular enveloped virus (IEV) transport to the cell surface through microtubule transport. Together with protein OPG064, forms a complex that interacts with host KLC2 (kinesin light chain isoform 2) to engage the kinesin-1 complex and thereby promote IEV trafficking. In Cynomys gunnisoni (Gunnison's prairie dog), this protein is Protein OPG056 (OPG056).